The chain runs to 294 residues: MKKLLLIITVFFTCSAVAETSNIVALVNNEPITLNEFRARKKMIMALNNVEEVTPAQNKQLSDIAIKSLIDESLLFQYYGDKEISQEEIDNAIKSIEDRNKMPHGSLLQYLKSRSVNPDSFISQIKSELIKMNVLSGLSRSVQVSNKEIDVAILSSDQKEVEVSMQIFTSKDKSDKTFAQMNNLKSKLKNCSDVKKSLYENFATMTVITDKLSKIEEAKQTIVKDLNPNQTSNVFEKYNEFEIVQVCTKKILNISEDENNYVVNFLTNKKISQKAQKFFEDMHKKAYIKITLPS.

The signal sequence occupies residues 1–18 (MKKLLLIITVFFTCSAVA).

This is an uncharacterized protein from Rickettsia bellii (strain RML369-C).